Reading from the N-terminus, the 137-residue chain is MSSSQGGGGRGKAKTTKAVSRSSKAGLQFPVGRIARYLKAGKYAERVGAGAPVYLSAVLEYLAAEVLELAGNAARDNKKNRIVPRHIQLAVRNDEELSRLLGTVTIAAGGVLPNIQQVLLPKKGGGKGDIGSASQEF.

Gly residues predominate over residues 1-10 (MSSSQGGGGR). A disordered region spans residues 1–21 (MSSSQGGGGRGKAKTTKAVSR). Phosphoserine; by ATM and ATR is present on S134. Residues 134–135 (SQ) carry the [ST]-Q motif motif.

The protein belongs to the histone H2A family. The nucleosome is a histone octamer containing two molecules each of H2A, H2B, H3 and H4 assembled in one H3-H4 heterotetramer and two H2A-H2B heterodimers. The octamer wraps approximately 147 bp of DNA. Interacts with numerous proteins required for DNA damage signaling and repair when phosphorylated on Ser-134. Phosphorylated to form H2AXS139ph (gamma-H2AX) in response to DNA double strand breaks (DSBs) generated by exogenous genotoxic agents and by stalled replication forks, and may also occur during meiotic recombination events. Phosphorylation can extend up to several thousand nucleosomes from the actual site of the DSB and may mark the surrounding chromatin for recruitment of proteins required for DNA damage signaling and repair. Widespread phosphorylation may also serve to amplify the damage signal or aid repair of persistent lesions. H2AXS139ph in response to ionizing radiation is mediated by ATM while defects in DNA replication induce H2AXS139ph subsequent to activation of ATR. Dephosphorylation of H2AXS139ph by PP2A is required for DNA DSB repair.

The protein resides in the nucleus. It is found in the chromosome. Its function is as follows. Variant histone H2A which replaces conventional H2A in a subset of nucleosomes. Nucleosomes wrap and compact DNA into chromatin, limiting DNA accessibility to the cellular machineries which require DNA as a template. Histones thereby play a central role in transcription regulation, DNA repair, DNA replication and chromosomal stability. DNA accessibility is regulated via a complex set of post-translational modifications of histones, also called histone code, and nucleosome remodeling. Required for checkpoint-mediated arrest of cell cycle progression in response to low doses of ionizing radiation and for efficient repair of DNA double strand breaks (DSBs) specifically when modified by C-terminal phosphorylation. The sequence is that of Probable histone H2AXa from Oryza sativa subsp. indica (Rice).